The following is a 195-amino-acid chain: dITP/XTP pyrophosphatase (195 aa).

9–14 provides a ligand contact to substrate; that stretch reads TGNKGK. Positions 41 and 70 each coordinate Mg(2+). Asp70 acts as the Proton acceptor in catalysis. Residues Ser71, 155–158, Lys178, and 183–184 each bind substrate; these read FGYD and HR.

Belongs to the HAM1 NTPase family. As to quaternary structure, homodimer. Mg(2+) serves as cofactor.

It catalyses the reaction XTP + H2O = XMP + diphosphate + H(+). It carries out the reaction dITP + H2O = dIMP + diphosphate + H(+). The catalysed reaction is ITP + H2O = IMP + diphosphate + H(+). Its function is as follows. Pyrophosphatase that catalyzes the hydrolysis of nucleoside triphosphates to their monophosphate derivatives, with a high preference for the non-canonical purine nucleotides XTP (xanthosine triphosphate), dITP (deoxyinosine triphosphate) and ITP. Seems to function as a house-cleaning enzyme that removes non-canonical purine nucleotides from the nucleotide pool, thus preventing their incorporation into DNA/RNA and avoiding chromosomal lesions. The polypeptide is dITP/XTP pyrophosphatase (Haemophilus influenzae (strain ATCC 51907 / DSM 11121 / KW20 / Rd)).